The following is a 112-amino-acid chain: MAM and fibronectin type III domain-containing protein 2 (112 aa).

As to expression, component of the acid-insoluble and acid-soluble organic matrix of the aragonitic skeleton (at protein level).

Its subcellular location is the secreted. This is MAM and fibronectin type III domain-containing protein 2 from Acropora millepora (Staghorn coral).